Reading from the N-terminus, the 344-residue chain is Phenylalanine--tRNA ligase alpha subunit (344 aa).

Glutamate 256 serves as a coordination point for Mg(2+).

It belongs to the class-II aminoacyl-tRNA synthetase family. Phe-tRNA synthetase alpha subunit type 1 subfamily. Tetramer of two alpha and two beta subunits. Mg(2+) serves as cofactor.

It localises to the cytoplasm. It carries out the reaction tRNA(Phe) + L-phenylalanine + ATP = L-phenylalanyl-tRNA(Phe) + AMP + diphosphate + H(+). The chain is Phenylalanine--tRNA ligase alpha subunit from Onion yellows phytoplasma (strain OY-M).